The primary structure comprises 148 residues: Snaclec convulxin subunit beta (148 aa).

The N-terminal stretch at 1-23 is a signal peptide; the sequence is MGRFIFVSFGLLVVFLSLSGSEA. Intrachain disulfides connect Cys-27-Cys-38, Cys-55-Cys-144, and Cys-121-Cys-136. Residues 34-148 form the C-type lectin domain; the sequence is YDRYCYKVFK…TYSFVCKFEA (115 aa).

It belongs to the snaclec family. As to quaternary structure, tetramer of heterodimers of alpha and beta subunits (alphabeta)(4); disulfide-linked. In terms of tissue distribution, expressed by the venom gland.

The protein localises to the secreted. In terms of biological role, snake venom lectin that activates platelets by binding to the platelet collagen receptor glycoprotein VI (GP6). The indirect activation of integrin alpha-IIb/beta-3 (ITGA2B/ITGB3) also induced by the toxin is upstream the cytoskeletal translocation of GPIb, FcRgamma (FCER1G) and 14-3-3zeta (YWHAZ). The chain is Snaclec convulxin subunit beta from Crotalus durissus terrificus (South American rattlesnake).